The following is a 213-amino-acid chain: Thiamine-phosphate synthase (213 aa).

Residues 40 to 44 (QFREK) and Asn-75 each bind 4-amino-2-methyl-5-(diphosphooxymethyl)pyrimidine. Mg(2+) contacts are provided by Asp-76 and Asp-95. Ser-113 is a 4-amino-2-methyl-5-(diphosphooxymethyl)pyrimidine binding site. Position 139-141 (139-141 (TPS)) interacts with 2-[(2R,5Z)-2-carboxy-4-methylthiazol-5(2H)-ylidene]ethyl phosphate. Residue Lys-142 coordinates 4-amino-2-methyl-5-(diphosphooxymethyl)pyrimidine. 2-[(2R,5Z)-2-carboxy-4-methylthiazol-5(2H)-ylidene]ethyl phosphate is bound by residues Gly-171 and 191–192 (IS).

It belongs to the thiamine-phosphate synthase family. Requires Mg(2+) as cofactor.

The catalysed reaction is 2-[(2R,5Z)-2-carboxy-4-methylthiazol-5(2H)-ylidene]ethyl phosphate + 4-amino-2-methyl-5-(diphosphooxymethyl)pyrimidine + 2 H(+) = thiamine phosphate + CO2 + diphosphate. The enzyme catalyses 2-(2-carboxy-4-methylthiazol-5-yl)ethyl phosphate + 4-amino-2-methyl-5-(diphosphooxymethyl)pyrimidine + 2 H(+) = thiamine phosphate + CO2 + diphosphate. It catalyses the reaction 4-methyl-5-(2-phosphooxyethyl)-thiazole + 4-amino-2-methyl-5-(diphosphooxymethyl)pyrimidine + H(+) = thiamine phosphate + diphosphate. It participates in cofactor biosynthesis; thiamine diphosphate biosynthesis; thiamine phosphate from 4-amino-2-methyl-5-diphosphomethylpyrimidine and 4-methyl-5-(2-phosphoethyl)-thiazole: step 1/1. Functionally, condenses 4-methyl-5-(beta-hydroxyethyl)thiazole monophosphate (THZ-P) and 2-methyl-4-amino-5-hydroxymethyl pyrimidine pyrophosphate (HMP-PP) to form thiamine monophosphate (TMP). The protein is Thiamine-phosphate synthase of Staphylococcus aureus (strain JH1).